A 369-amino-acid chain; its full sequence is Maltose/maltodextrin import ATP-binding protein MalK (369 aa).

One can recognise an ABC transporter domain in the interval 4–234; the sequence is VQLRNVTKAW…PADRFVAGFI (231 aa). 36–43 lines the ATP pocket; the sequence is GPSGCGKS.

Belongs to the ABC transporter superfamily. Maltooligosaccharide importer (TC 3.A.1.1.1) family. In terms of assembly, the complex is composed of two ATP-binding proteins (MalK), two transmembrane proteins (MalG and MalK) and a solute-binding protein (MalE).

It is found in the cell inner membrane. The enzyme catalyses D-maltose(out) + ATP + H2O = D-maltose(in) + ADP + phosphate + H(+). Its function is as follows. Part of the ABC transporter complex MalEFGK involved in maltose/maltodextrin import. Responsible for energy coupling to the transport system. This is Maltose/maltodextrin import ATP-binding protein MalK from Salmonella typhi.